The sequence spans 162 residues: Crossover junction endodeoxyribonuclease RuvC (162 aa).

Active-site residues include aspartate 7, glutamate 67, and aspartate 140. Residues aspartate 7, glutamate 67, and aspartate 140 each coordinate Mg(2+).

The protein belongs to the RuvC family. As to quaternary structure, homodimer which binds Holliday junction (HJ) DNA. The HJ becomes 2-fold symmetrical on binding to RuvC with unstacked arms; it has a different conformation from HJ DNA in complex with RuvA. In the full resolvosome a probable DNA-RuvA(4)-RuvB(12)-RuvC(2) complex forms which resolves the HJ. It depends on Mg(2+) as a cofactor.

It localises to the cytoplasm. It catalyses the reaction Endonucleolytic cleavage at a junction such as a reciprocal single-stranded crossover between two homologous DNA duplexes (Holliday junction).. Functionally, the RuvA-RuvB-RuvC complex processes Holliday junction (HJ) DNA during genetic recombination and DNA repair. Endonuclease that resolves HJ intermediates. Cleaves cruciform DNA by making single-stranded nicks across the HJ at symmetrical positions within the homologous arms, yielding a 5'-phosphate and a 3'-hydroxyl group; requires a central core of homology in the junction. The consensus cleavage sequence is 5'-(A/T)TT(C/G)-3'. Cleavage occurs on the 3'-side of the TT dinucleotide at the point of strand exchange. HJ branch migration catalyzed by RuvA-RuvB allows RuvC to scan DNA until it finds its consensus sequence, where it cleaves and resolves the cruciform DNA. In Heliobacterium modesticaldum (strain ATCC 51547 / Ice1), this protein is Crossover junction endodeoxyribonuclease RuvC.